Reading from the N-terminus, the 193-residue chain is Xanthine phosphoribosyltransferase (193 aa).

2 residues coordinate xanthine: Leu20 and Thr27. 128–132 lines the 5-phospho-alpha-D-ribose 1-diphosphate pocket; the sequence is ANGQA. Lys156 serves as a coordination point for xanthine.

This sequence belongs to the purine/pyrimidine phosphoribosyltransferase family. Xpt subfamily. In terms of assembly, homodimer.

Its subcellular location is the cytoplasm. It carries out the reaction XMP + diphosphate = xanthine + 5-phospho-alpha-D-ribose 1-diphosphate. It functions in the pathway purine metabolism; XMP biosynthesis via salvage pathway; XMP from xanthine: step 1/1. Functionally, converts the preformed base xanthine, a product of nucleic acid breakdown, to xanthosine 5'-monophosphate (XMP), so it can be reused for RNA or DNA synthesis. The chain is Xanthine phosphoribosyltransferase from Streptococcus pneumoniae (strain P1031).